The following is a 327-amino-acid chain: Lipoyl synthase (327 aa).

Positions 72, 77, 83, 98, 102, 105, and 313 each coordinate [4Fe-4S] cluster. The 220-residue stretch at Cys-83–Leu-302 folds into the Radical SAM core domain.

The protein belongs to the radical SAM superfamily. Lipoyl synthase family. [4Fe-4S] cluster serves as cofactor.

It is found in the cytoplasm. The catalysed reaction is [[Fe-S] cluster scaffold protein carrying a second [4Fe-4S](2+) cluster] + N(6)-octanoyl-L-lysyl-[protein] + 2 oxidized [2Fe-2S]-[ferredoxin] + 2 S-adenosyl-L-methionine + 4 H(+) = [[Fe-S] cluster scaffold protein] + N(6)-[(R)-dihydrolipoyl]-L-lysyl-[protein] + 4 Fe(3+) + 2 hydrogen sulfide + 2 5'-deoxyadenosine + 2 L-methionine + 2 reduced [2Fe-2S]-[ferredoxin]. The protein operates within protein modification; protein lipoylation via endogenous pathway; protein N(6)-(lipoyl)lysine from octanoyl-[acyl-carrier-protein]: step 2/2. Catalyzes the radical-mediated insertion of two sulfur atoms into the C-6 and C-8 positions of the octanoyl moiety bound to the lipoyl domains of lipoate-dependent enzymes, thereby converting the octanoylated domains into lipoylated derivatives. This is Lipoyl synthase from Francisella tularensis subsp. mediasiatica (strain FSC147).